Consider the following 260-residue polypeptide: 21S rRNA pseudouridine(2819) synthase (260 aa).

The active site involves aspartate 68.

This sequence belongs to the pseudouridine synthase RluA family.

The protein resides in the mitochondrion. It carries out the reaction uridine(2819) in 21S rRNA = pseudouridine(2819) in 21S rRNA. Its function is as follows. Pseudouridylate synthase responsible for the pseudouridine-2819 formation in mitochondrial 21S rRNA. May modulate the efficiency or the fidelity of the mitochondrial translation machinery. The protein is 21S rRNA pseudouridine(2819) synthase (PUS5) of Eremothecium gossypii (strain ATCC 10895 / CBS 109.51 / FGSC 9923 / NRRL Y-1056) (Yeast).